Here is a 187-residue protein sequence, read N- to C-terminus: GTP cyclohydrolase 1 (187 aa).

C76, H79, and C148 together coordinate Zn(2+).

The protein belongs to the GTP cyclohydrolase I family. As to quaternary structure, toroid-shaped homodecamer, composed of two pentamers of five dimers.

It carries out the reaction GTP + H2O = 7,8-dihydroneopterin 3'-triphosphate + formate + H(+). It participates in cofactor biosynthesis; 7,8-dihydroneopterin triphosphate biosynthesis; 7,8-dihydroneopterin triphosphate from GTP: step 1/1. The protein is GTP cyclohydrolase 1 of Streptococcus agalactiae serotype III (strain NEM316).